The primary structure comprises 294 residues: Homeobox-leucine zipper protein ATHB-16 (294 aa).

Residues M1 to E20 show a composition bias toward polar residues. The interval M1 to Q31 is disordered. Residues L56–Q115 constitute a DNA-binding region (homeobox). The segment at L116 to I151 is leucine-zipper. The segment covering S219–G238 has biased composition (polar residues). A disordered region spans residues S219–T241.

Belongs to the HD-ZIP homeobox family. Class I subfamily. As to expression, widely expressed with a lower level in siliques.

The protein localises to the nucleus. Functionally, probable transcription factor that may function as a negative regulator of the flowering time response to photoperiod. May act to repress cell expansion during plant development. In Arabidopsis thaliana (Mouse-ear cress), this protein is Homeobox-leucine zipper protein ATHB-16 (ATHB-16).